Reading from the N-terminus, the 112-residue chain is cAMP-regulated phosphoprotein 19 (112 aa).

N-acetylmethionine is present on Met-1. Residues 1-11 show a composition bias toward low complexity; that stretch reads MSAEVPEAASA. The segment at 1 to 49 is disordered; sequence MSAEVPEAASAEEQKEMEDKVTSPEKAEEAKLKARYPHLGQKPGGSDFL. An N-acetylserine modification is found at Ser-2. A phosphoserine mark is found at Ser-2 and Ser-23. Positions 12-32 are enriched in basic and acidic residues; sequence EEQKEMEDKVTSPEKAEEAKL. 2 positions are modified to phosphoserine; by GWL: Ser-62 and Ser-104. Positions 72–112 are disordered; that stretch reads MKNKQLPTATPDKTEVTGDHIPTPQDLPQRKPSLVASKLAG. Ser-104 is modified (phosphoserine; by PKA). Lys-109 is subject to N6-acetyllysine.

As to quaternary structure, interacts (when phosphorylated at Ser-62) with PPP2R2D. Interacts with SNCA. Interacts with PPP2R2A; the interaction is direct and this interaction inhibits PP2A activity. In terms of processing, phosphorylation at Ser-62 by MASTL/GWL during mitosis is essential for interaction with PPP2R2D (PR55-delta) and subsequent inactivation of PP2A. Phosphorylated by PKA. In terms of tissue distribution, isoform ARPP-19 is found in all brain regions and also present in non-neuronal tissues. Isoform ARPP-16 is enriched in the caudate nucleus, found in low levels in cerebral cortex.

The protein resides in the cytoplasm. Protein phosphatase inhibitor that specifically inhibits protein phosphatase 2A (PP2A) during mitosis. Inhibition of PP2A is enhanced when ARPP19 is phosphorylated. When phosphorylated at Ser-62 during mitosis, specifically interacts with PPP2R2D (PR55-delta) and inhibits its activity, leading to inactivation of PP2A, an essential condition to keep cyclin-B1-CDK1 activity high during M phase. May indirectly enhance GAP-43 expression. The chain is cAMP-regulated phosphoprotein 19 (ARPP19) from Bos taurus (Bovine).